Consider the following 309-residue polypeptide: MDILTAPVLIGVSIVVITVLYLFLKPAGSNSTPPKPQNKIPKALQDPSVKYPLPLIEKEEINHDTKRFRFGLPSSSHVLGLPIGQHIYLSAKVNGSLVVRAYTPVSSDQDQGYVDLVVKVYYKNTHPSYPDGGKMSQYLDNMKIGDTIDFRGPNGLLVYNGKGKFAIRPDKKSEAEVRKFKHVAMIAGGTGITPMLQLIRSITADSFDETVCSLIFANQTEKDILLRNELDEVHRNHPSKLKLWYTLDRPSEGWKYSEGFVNAAMMKDHLPPADSDVLVVMCGPPAMIEKACLPNLLKLGYKKENIFAY.

A helical membrane pass occupies residues 3-23; that stretch reads ILTAPVLIGVSIVVITVLYLF. In terms of domain architecture, FAD-binding FR-type spans 48–160; the sequence is SVKYPLPLIE…RGPNGLLVYN (113 aa). Residues 140–170 and 179–214 contribute to the FAD site; these read DNMK…IRPD and KFKH…VCSL.

The protein belongs to the flavoprotein pyridine nucleotide cytochrome reductase family. FAD serves as cofactor.

Its subcellular location is the membrane. The enzyme catalyses 2 Fe(III)-[cytochrome b5] + NADH = 2 Fe(II)-[cytochrome b5] + NAD(+) + H(+). NADH-cytochrome b5 reductases are involved in desaturation and elongation of fatty acids, cholesterol biosynthesis and drug metabolism. In Danio rerio (Zebrafish), this protein is NADH-cytochrome b5 reductase 2 (cyb5r2).